A 545-amino-acid chain; its full sequence is Chaperonin GroEL (545 aa).

ATP contacts are provided by residues 29 to 32, Lys-50, 86 to 90, Gly-414, 477 to 479, and Asp-493; these read TMGP, DGTTT, and DAA.

This sequence belongs to the chaperonin (HSP60) family. In terms of assembly, forms a cylinder of 14 subunits composed of two heptameric rings stacked back-to-back. Interacts with the co-chaperonin GroES.

Its subcellular location is the cytoplasm. It catalyses the reaction ATP + H2O + a folded polypeptide = ADP + phosphate + an unfolded polypeptide.. In terms of biological role, together with its co-chaperonin GroES, plays an essential role in assisting protein folding. The GroEL-GroES system forms a nano-cage that allows encapsulation of the non-native substrate proteins and provides a physical environment optimized to promote and accelerate protein folding. In Campylobacter lari (strain RM2100 / D67 / ATCC BAA-1060), this protein is Chaperonin GroEL.